Consider the following 1182-residue polypeptide: Myosin IC heavy chain (1182 aa).

A Myosin motor domain is found at 15 to 698; it reads EGLDDMTLLS…MLFSLEETRE (684 aa). 109-116 contacts ATP; the sequence is GESGAGKT. Positions 571-593 are actin-binding; it reads AAELVATLMKSTPHYIRTIKPND. Positions 774–957 constitute a TH1 domain; the sequence is RNRFSMISVR…QFHIASGLPA (184 aa). Disordered stretches follow at residues 999–1052 and 1064–1103; these read KPAP…PAPG and SKPLPSPTGAPMMKKPAPTAPGGPAPAGAPTPMMKKPAGQ. The segment covering 1013–1042 has biased composition (low complexity); it reads KKPAPTAPGGAPMMKKPAPAPGGAPMMKKP. The span at 1081 to 1092 shows a compositional bias: pro residues; the sequence is PTAPGGPAPAGA. The region spanning 1123–1182 is the SH3 domain; it reads PPPQQYIALYEYDAMQPDELTFKENDVINLIKKVDADWWQGELVRTKQIGMLPSNYVQQI.

It belongs to the TRAFAC class myosin-kinesin ATPase superfamily. Myosin family. As to quaternary structure, myosin I heavy chain is single-headed. Dimer of a heavy and a light chain. Inability to self-assemble into filaments.

The protein localises to the cell projection. It is found in the lamellipodium. Functionally, myosin is a protein that binds to actin and has ATPase activity that is activated by actin. Involved in the process of phagocytosis and appears to support streaming behavior. This Dictyostelium discoideum (Social amoeba) protein is Myosin IC heavy chain (myoC).